Consider the following 853-residue polypeptide: DNA mismatch repair protein MutS (853 aa).

614–621 (GPNMGGKS) provides a ligand contact to ATP.

This sequence belongs to the DNA mismatch repair MutS family.

Functionally, this protein is involved in the repair of mismatches in DNA. It is possible that it carries out the mismatch recognition step. This protein has a weak ATPase activity. The sequence is that of DNA mismatch repair protein MutS from Shigella flexneri serotype 5b (strain 8401).